The following is a 126-amino-acid chain: Large ribosomal subunit protein bL12 (126 aa).

It belongs to the bacterial ribosomal protein bL12 family. In terms of assembly, homodimer. Part of the ribosomal stalk of the 50S ribosomal subunit. Forms a multimeric L10(L12)X complex, where L10 forms an elongated spine to which 2 to 4 L12 dimers bind in a sequential fashion. Binds GTP-bound translation factors.

Forms part of the ribosomal stalk which helps the ribosome interact with GTP-bound translation factors. Is thus essential for accurate translation. The sequence is that of Large ribosomal subunit protein bL12 from Legionella pneumophila (strain Paris).